A 265-amino-acid polypeptide reads, in one-letter code: MRLYRDRAVVLRQHKLGEADRIVTLLTRDHGLVRAVAKGVRRTRSKFGSRLEPFAHIDAQLHPGRNLDIVTQVVSIDAFAADIVNDYGRYTCGCAMLETAERLAGEERAPAPALHRLTVGALRAVADGSRPRDLLLDAYLLRAMGIAGWAPALTECARCATPGPHRAFHIAAGGSVCPHCRPAGSTTPPLGVLDLMSALHDGDWEAAQGAPQSHRSYVSGLVAAHLQWHLERQLKTLPLVERFYQADRSVAERRAALIGQDSECG.

Belongs to the RecO family.

In terms of biological role, involved in DNA repair and RecF pathway recombination. The protein is DNA repair protein RecO of Mycobacterium marinum (strain ATCC BAA-535 / M).